The primary structure comprises 376 residues: Ribonucleoside-diphosphate reductase subunit beta (376 aa).

Fe cation contacts are provided by Asp85, Glu116, and His119. Residue Tyr123 is part of the active site. The Fe cation site is built by Glu205, Glu239, and His242.

This sequence belongs to the ribonucleoside diphosphate reductase small chain family. As to quaternary structure, tetramer of two alpha and two beta subunits. It depends on Fe cation as a cofactor.

The catalysed reaction is a 2'-deoxyribonucleoside 5'-diphosphate + [thioredoxin]-disulfide + H2O = a ribonucleoside 5'-diphosphate + [thioredoxin]-dithiol. Functionally, provides the precursors necessary for DNA synthesis. Catalyzes the biosynthesis of deoxyribonucleotides from the corresponding ribonucleotides. This chain is Ribonucleoside-diphosphate reductase subunit beta (nrdB), found in Buchnera aphidicola subsp. Baizongia pistaciae (strain Bp).